Consider the following 182-residue polypeptide: Superoxide dismutase [Cu-Zn] (182 aa).

Positions 1 to 19 (MFRTLTVVPLLALGLSLSA) are cleaved as a signal peptide. Residue Cys20 is the site of N-palmitoyl cysteine attachment. The S-diacylglycerol cysteine moiety is linked to residue Cys20. Positions 69, 71, and 95 each coordinate Cu cation. Cys76 and Cys175 are joined by a disulfide. The interval 91-118 (AAGGHFDPGASHNHDGPHARNDQGHGGD) is disordered. His95, His104, His115, and Asp118 together coordinate Zn(2+). The segment covering 102–115 (HNHDGPHARNDQGH) has biased composition (basic and acidic residues).

This sequence belongs to the Cu-Zn superoxide dismutase family. It depends on Cu cation as a cofactor. Zn(2+) serves as cofactor.

It is found in the cell membrane. The catalysed reaction is 2 superoxide + 2 H(+) = H2O2 + O2. In terms of biological role, destroys radicals which are normally produced within the cells and which are toxic to biological systems. In Deinococcus radiodurans (strain ATCC 13939 / DSM 20539 / JCM 16871 / CCUG 27074 / LMG 4051 / NBRC 15346 / NCIMB 9279 / VKM B-1422 / R1), this protein is Superoxide dismutase [Cu-Zn] (sodC).